Consider the following 127-residue polypeptide: Glycine cleavage system H protein (127 aa).

The Lipoyl-binding domain maps to 22–104 (KVRIGITDFA…YEKAWMIVVE (83 aa)). N6-lipoyllysine is present on lysine 63.

It belongs to the GcvH family. The glycine cleavage system is composed of four proteins: P, T, L and H. The cofactor is (R)-lipoate.

The glycine cleavage system catalyzes the degradation of glycine. The H protein shuttles the methylamine group of glycine from the P protein to the T protein. In terms of biological role, is also involved in protein lipoylation via its role as an octanoyl/lipoyl carrier protein intermediate. This chain is Glycine cleavage system H protein, found in Bacillus licheniformis (strain ATCC 14580 / DSM 13 / JCM 2505 / CCUG 7422 / NBRC 12200 / NCIMB 9375 / NCTC 10341 / NRRL NRS-1264 / Gibson 46).